The sequence spans 149 residues: D-aminoacyl-tRNA deacylase (149 aa).

The Gly-cisPro motif, important for rejection of L-amino acids motif lies at 137 to 138 (GP).

This sequence belongs to the DTD family. As to quaternary structure, homodimer.

Its subcellular location is the cytoplasm. The catalysed reaction is glycyl-tRNA(Ala) + H2O = tRNA(Ala) + glycine + H(+). The enzyme catalyses a D-aminoacyl-tRNA + H2O = a tRNA + a D-alpha-amino acid + H(+). Functionally, an aminoacyl-tRNA editing enzyme that deacylates mischarged D-aminoacyl-tRNAs. Also deacylates mischarged glycyl-tRNA(Ala), protecting cells against glycine mischarging by AlaRS. Acts via tRNA-based rather than protein-based catalysis; rejects L-amino acids rather than detecting D-amino acids in the active site. By recycling D-aminoacyl-tRNA to D-amino acids and free tRNA molecules, this enzyme counteracts the toxicity associated with the formation of D-aminoacyl-tRNA entities in vivo and helps enforce protein L-homochirality. This is D-aminoacyl-tRNA deacylase from Anaeromyxobacter dehalogenans (strain 2CP-C).